The sequence spans 332 residues: Lipoyl synthase (332 aa).

[4Fe-4S] cluster-binding residues include C74, C79, C85, C100, C104, C107, and S314. The 219-residue stretch at 85-303 folds into the Radical SAM core domain; it reads CFGKGTATFM…EQEAYRMGFS (219 aa).

The protein belongs to the radical SAM superfamily. Lipoyl synthase family. The cofactor is [4Fe-4S] cluster.

It localises to the cytoplasm. The catalysed reaction is [[Fe-S] cluster scaffold protein carrying a second [4Fe-4S](2+) cluster] + N(6)-octanoyl-L-lysyl-[protein] + 2 oxidized [2Fe-2S]-[ferredoxin] + 2 S-adenosyl-L-methionine + 4 H(+) = [[Fe-S] cluster scaffold protein] + N(6)-[(R)-dihydrolipoyl]-L-lysyl-[protein] + 4 Fe(3+) + 2 hydrogen sulfide + 2 5'-deoxyadenosine + 2 L-methionine + 2 reduced [2Fe-2S]-[ferredoxin]. Its pathway is protein modification; protein lipoylation via endogenous pathway; protein N(6)-(lipoyl)lysine from octanoyl-[acyl-carrier-protein]: step 2/2. Its function is as follows. Catalyzes the radical-mediated insertion of two sulfur atoms into the C-6 and C-8 positions of the octanoyl moiety bound to the lipoyl domains of lipoate-dependent enzymes, thereby converting the octanoylated domains into lipoylated derivatives. The protein is Lipoyl synthase of Verminephrobacter eiseniae (strain EF01-2).